The following is a 263-amino-acid chain: Ribonuclease HII (263 aa).

Residues 71–262 (QAIAGIDEVG…VKSMCCDSTN (192 aa)) form the RNase H type-2 domain. A divalent metal cation contacts are provided by aspartate 77, glutamate 78, and aspartate 172.

The protein belongs to the RNase HII family. Mn(2+) is required as a cofactor. Requires Mg(2+) as cofactor.

It localises to the cytoplasm. It carries out the reaction Endonucleolytic cleavage to 5'-phosphomonoester.. Its function is as follows. Endonuclease that specifically degrades the RNA of RNA-DNA hybrids. This is Ribonuclease HII from Streptococcus pyogenes serotype M4 (strain MGAS10750).